A 100-amino-acid polypeptide reads, in one-letter code: Small ribosomal subunit protein uS14c (100 aa).

The protein belongs to the universal ribosomal protein uS14 family. In terms of assembly, part of the 30S ribosomal subunit.

The protein resides in the plastid. Its subcellular location is the chloroplast. Its function is as follows. Binds 16S rRNA, required for the assembly of 30S particles. This chain is Small ribosomal subunit protein uS14c, found in Liriodendron tulipifera (Tuliptree).